We begin with the raw amino-acid sequence, 32 residues long: MSDIN-like toxin proprotein 1 (32 aa).

A propeptide spanning residues Met1–Pro10 is cleaved from the precursor. The segment at residues Gly11–Pro18 is a cross-link (cyclopeptide (Gly-Pro)). Positions Cys19–Glu32 are excised as a propeptide.

Belongs to the MSDIN fungal toxin family. Post-translationally, processed by the macrocyclase-peptidase enzyme POPB to yield a toxic cyclic octapeptide. POPB first removes 10 residues from the N-terminus. Conformational trapping of the remaining peptide forces the enzyme to release this intermediate rather than proceed to macrocyclization. The enzyme rebinds the remaining peptide in a different conformation and catalyzes macrocyclization of the N-terminal 8 residues.

In terms of biological role, probable toxin that belongs to the MSDIN-like toxin family responsible for a large number of food poisoning cases and deaths. The protein is MSDIN-like toxin proprotein 1 of Amanita bisporigera (Destroying angel).